The chain runs to 569 residues: Ribonuclease J (569 aa).

Zn(2+) is bound by residues histidine 81, histidine 83, aspartate 85, histidine 86, histidine 150, and aspartate 172. Position 373–377 (373–377 (HASGH)) interacts with substrate. Histidine 399 serves as a coordination point for Zn(2+).

It belongs to the metallo-beta-lactamase superfamily. RNA-metabolizing metallo-beta-lactamase-like family. Bacterial RNase J subfamily. Homodimer, may be a subunit of the RNA degradosome. It depends on Zn(2+) as a cofactor.

It is found in the cytoplasm. Its function is as follows. An RNase that has 5'-3' exonuclease and possibly endoonuclease activity. Involved in maturation of rRNA and in some organisms also mRNA maturation and/or decay. The sequence is that of Ribonuclease J from Mycoplasma pneumoniae (strain ATCC 29342 / M129 / Subtype 1) (Mycoplasmoides pneumoniae).